A 1072-amino-acid chain; its full sequence is Zn(2)-C6 fungal-type transcription factor FTF1a (1072 aa).

Residues 178–205 (CMACRRKKIRCSGEKPACKHCLRSRILC) constitute a DNA-binding region (zn(2)-C6 fungal-type).

It localises to the nucleus. Functionally, zn(2)-C6 fungal-type transcription factor that has a role in the establishment of the fungus within the plant and/or the progress of the disease. Regulates the expression of virulence factors such as SIX1 and SIX6. The protein is Zn(2)-C6 fungal-type transcription factor FTF1a of Fusarium oxysporum f. sp. lycopersici (strain 4287 / CBS 123668 / FGSC 9935 / NRRL 34936) (Fusarium vascular wilt of tomato).